Reading from the N-terminus, the 473-residue chain is Flavonol 3-O-glucosyltransferase UGT89B1 (473 aa).

The Proton acceptor role is filled by His-25. His-25 lines the an anthocyanidin pocket. The active-site Charge relay is the Asp-127. 7 residues coordinate UDP-alpha-D-glucose: Ala-348, Gln-350, His-365, Trp-368, Asn-369, Ser-370, and Glu-373. Ala-388 lines the an anthocyanidin pocket. UDP-alpha-D-glucose is bound by residues Asp-389 and Gln-390.

It belongs to the UDP-glycosyltransferase family.

It carries out the reaction a flavonol + UDP-alpha-D-glucose = a flavonol 3-O-beta-D-glucoside + UDP + H(+). The catalysed reaction is a 7-O-hydroxy-flavonol + UDP-alpha-D-glucose = a flavonol 7-O-beta-D-glucoside + UDP + H(+). In terms of biological role, possesses quercetin 3-O-glucosyltransferase, 7-O-glucosyltransferase and 4'-O-glucosyltransferase activities in vitro. Also active in vitro on benzoates and benzoate derivatives. The sequence is that of Flavonol 3-O-glucosyltransferase UGT89B1 from Arabidopsis thaliana (Mouse-ear cress).